The primary structure comprises 67 residues: Probable Sec-independent protein translocase protein TatE (67 aa).

Residues 4–21 (ISITKLLVIAALVVLLFG) traverse the membrane as a helical segment. The interval 44–67 (NDDDTGAKTPAASEAPAERLSHKE) is disordered.

It belongs to the TatA/E family. TatE subfamily.

Its subcellular location is the cell inner membrane. Functionally, part of the twin-arginine translocation (Tat) system that transports large folded proteins containing a characteristic twin-arginine motif in their signal peptide across membranes. TatE shares overlapping functions with TatA. The chain is Probable Sec-independent protein translocase protein TatE from Cronobacter sakazakii (strain ATCC BAA-894) (Enterobacter sakazakii).